The primary structure comprises 152 residues: Superoxide dismutase [Cu-Zn] (152 aa).

Positions 45, 47, and 62 each coordinate Cu cation. A disulfide bridge links C56 with C145. Zn(2+) is bound by residues H62, H70, H79, and D82. H119 contacts Cu cation.

Belongs to the Cu-Zn superoxide dismutase family. Homodimer. Cu cation serves as cofactor. The cofactor is Zn(2+).

It localises to the cytoplasm. The catalysed reaction is 2 superoxide + 2 H(+) = H2O2 + O2. Destroys radicals which are normally produced within the cells and which are toxic to biological systems. This Paulownia kawakamii (Dragon tree) protein is Superoxide dismutase [Cu-Zn] (SODCC).